A 160-amino-acid chain; its full sequence is Transmembrane protein 220 (160 aa).

The next 5 membrane-spanning stretches (helical) occupy residues 3 to 23 (PALW…AALV), 30 to 50 (AEVW…VGLN), 62 to 82 (ISAI…SYLL), 100 to 120 (GLVI…NPVG), and 125 to 145 (LAIA…IYIN).

The protein resides in the membrane. The sequence is that of Transmembrane protein 220 (TMEM220) from Homo sapiens (Human).